Reading from the N-terminus, the 335-residue chain is MPATTRLITIYGATGNQGGGVARSLLKNPCFQVRALTRNPNSPASQELAGLGAEIRRADGFDSNSLLAAFEGSWGVFVNINSDDKAFRPAGPTEYDLGMKIVDMAAQAGVQHFVFSSGPSSTELTNGKIRMKAMEMKNKIERYARNNTQFQTVSFICAAWYLENFLVKEIAPLFGGFPFVADAEAFLTFRCPRWGGKEDVPFISISDDYGDIVQGLFLDPHRWNGHVVHGCSDILTFDELVTHFQNVTGQKARFQPLESWETFDTFGVPELEDTKLMFGLTQTTGGLYFGPEPSEKNTAAALKRATAAALGLPRDQQTLITVKGWFQKHFPVTPN.

NADP(+) contacts are provided by residues 12–17, 38–42, 59–60, 80–82, lysine 137, and 161–164; these read GATGNQ, RNPNS, DG, INS, and YLEN.

Belongs to the NmrA-type oxidoreductase family.

The protein operates within secondary metabolite biosynthesis. In terms of biological role, nmrA-like family domain-containing oxidoreductase; part of the gene cluster that mediates the biosynthesis of hancockiamides, an unusual new family of N-cinnamoylated piperazines. The NRPS hkm10 and the NmrA-like reductase hkm9 are proposed to convert two molecules of L-Phe to the intermediary piperazine called xenocockiamide A. Xenocockiamide A is then converted to hancockiamide D via a series of hydroxylations and O-methylations. The tyrosinase hkm6 may catalyze an aromatic hydroxylation, then the 2-oxoglutarate-dependent Fe(II) dioxygenase hkm4 and the FAD-dependent phenol hydroxylase hkm7 may catalyze consecutive hydroxylations to install 2 more hydroxy groups, and the methyltransferase hkm8 probably catalyzes two methylations using 2 molecules of S-adenosyl-L-methionine (SAM). The NRPS hkm11 activates and transfers trans-cinnamate supplied by the PAL hkm12 to hancockiamide D and produces hancockiamide A. NRPS Hkm11 has the flexibility to tolerate the bulky hancockiamide G as a substrate and the absence of the acetyl-transferase hkm3 opens up the opportunity for hkm11 to introduce a second N-cinnamoyl moiety. The cytochrome P450 monooxygenase hkm5 catalyzes the methylenedioxy bridge formation, converting hancockiamide A into hancockiamide G. Hkm5 can also convert hancockiamide B into hancockiamide C, and hancockiamide D into hancockiamide H. The N-acetyltransferase hkm3 finally transfers an acetyl group to 1-N of piperazine, converting hancockiamide A into hancockiamide B and hancockiamide G into hancockiamide C. This is NmrA-like family domain-containing oxidoreductase hkm9 from Aspergillus hancockii.